We begin with the raw amino-acid sequence, 242 residues long: Uridylate kinase (242 aa).

12–15 provides a ligand contact to ATP; that stretch reads KLSG. Positions 20 to 25 are involved in allosteric activation by GTP; that stretch reads GNDGFG. Gly54 serves as a coordination point for UMP. Gly55 and Arg59 together coordinate ATP. UMP contacts are provided by residues Asp74 and 135-142; that span reads TGNPYFST. Asn163, Tyr169, and Asp172 together coordinate ATP.

It belongs to the UMP kinase family. Homohexamer.

The protein resides in the cytoplasm. The catalysed reaction is UMP + ATP = UDP + ADP. Its pathway is pyrimidine metabolism; CTP biosynthesis via de novo pathway; UDP from UMP (UMPK route): step 1/1. Its activity is regulated as follows. Allosterically activated by GTP. Inhibited by UTP. Functionally, catalyzes the reversible phosphorylation of UMP to UDP. This is Uridylate kinase from Listeria innocua serovar 6a (strain ATCC BAA-680 / CLIP 11262).